A 299-amino-acid chain; its full sequence is Oxygen-dependent coproporphyrinogen-III oxidase (299 aa).

Ser-92 lines the substrate pocket. The a divalent metal cation site is built by His-96 and His-106. The Proton donor role is filled by His-106. 108–110 is a substrate binding site; that stretch reads NVR. A divalent metal cation contacts are provided by His-145 and His-175. The segment at 240 to 275 is important for dimerization; it reads YVEFNLVWDRGTLFGLQTGGRTESILMSMPPLVRWE. Substrate is bound at residue 258-260; it reads GGR.

It belongs to the aerobic coproporphyrinogen-III oxidase family. As to quaternary structure, homodimer. The cofactor is a divalent metal cation.

It is found in the cytoplasm. It catalyses the reaction coproporphyrinogen III + O2 + 2 H(+) = protoporphyrinogen IX + 2 CO2 + 2 H2O. It participates in porphyrin-containing compound metabolism; protoporphyrin-IX biosynthesis; protoporphyrinogen-IX from coproporphyrinogen-III (O2 route): step 1/1. In terms of biological role, involved in the heme biosynthesis. Catalyzes the aerobic oxidative decarboxylation of propionate groups of rings A and B of coproporphyrinogen-III to yield the vinyl groups in protoporphyrinogen-IX. This chain is Oxygen-dependent coproporphyrinogen-III oxidase, found in Salmonella choleraesuis (strain SC-B67).